A 327-amino-acid chain; its full sequence is MSENTRKVTVAVIGSGNIGTDLMIKVIRHSEVLQMGAMVGIDPDSDGLARARRLGVPTTSDGVQGLLQLPNFDEIDVIFDATSAKAHEANAALLEPLGKRLIDLTPAALGPFVVPAVNLDEHRDAANVNMVTCGGQATIPIVAAVSRVTPVAYAEIVASIASKSAGPGTRANIDEFTETTSHAIETVGGARRGKAIIILNPADPPLIMRDTVLCLISAPDPATHDAIRDSIQTMVDHVATYVPGYRLKQQVQITPVPDGQPVRTLLASGDAATPTHQVSVFLEVEGAAHYLPAYAGNLDIMTSAAVRYAESVADTIAAPTAAQGATR.

Position 15–18 (15–18 (SGNI)) interacts with NAD(+). Catalysis depends on Cys133, which acts as the Acyl-thioester intermediate. NAD(+) is bound by residues 164–172 (SAGPGTRAN) and Asn297.

Belongs to the acetaldehyde dehydrogenase family.

It carries out the reaction acetaldehyde + NAD(+) + CoA = acetyl-CoA + NADH + H(+). This Rhodococcus jostii (strain RHA1) protein is Acetaldehyde dehydrogenase 5.